The chain runs to 166 residues: Regulatory protein RecX (166 aa).

This sequence belongs to the RecX family.

Its subcellular location is the cytoplasm. Functionally, modulates RecA activity. The polypeptide is Regulatory protein RecX (Salmonella choleraesuis (strain SC-B67)).